Consider the following 492-residue polypeptide: Catalase isozyme 3 (492 aa).

Active-site residues include His65 and Asn138. Tyr347 lines the heme pocket.

It belongs to the catalase family. In terms of assembly, homotetramer. The cofactor is heme. Abundant in green cotyledons, etiolated cotyledons, green hypocotyl and root, but not in young leaf.

The protein resides in the peroxisome. It carries out the reaction 2 H2O2 = O2 + 2 H2O. Its function is as follows. Occurs in almost all aerobically respiring organisms and serves to protect cells from the toxic effects of hydrogen peroxide. This is Catalase isozyme 3 (CAT3) from Cucurbita pepo (Vegetable marrow).